Consider the following 381-residue polypeptide: Methanesulfonate monooxygenase (381 aa).

The protein belongs to the SsuD family.

It catalyses the reaction an alkanesulfonate + FMNH2 + O2 = an aldehyde + FMN + sulfite + H2O + 2 H(+). Catalyzes the desulfonation of aliphatic sulfonates. Shows highest activity with methanesulfonate. The polypeptide is Methanesulfonate monooxygenase (msuD) (Pseudomonas aeruginosa (strain ATCC 15692 / DSM 22644 / CIP 104116 / JCM 14847 / LMG 12228 / 1C / PRS 101 / PAO1)).